We begin with the raw amino-acid sequence, 312 residues long: DNA-directed RNA polymerase subunit alpha (312 aa).

The segment at Met1–Thr226 is alpha N-terminal domain (alpha-NTD). The interval Asp244–Lys312 is alpha C-terminal domain (alpha-CTD).

Belongs to the RNA polymerase alpha chain family. As to quaternary structure, homodimer. The RNAP catalytic core consists of 2 alpha, 1 beta, 1 beta' and 1 omega subunit. When a sigma factor is associated with the core the holoenzyme is formed, which can initiate transcription.

It carries out the reaction RNA(n) + a ribonucleoside 5'-triphosphate = RNA(n+1) + diphosphate. In terms of biological role, DNA-dependent RNA polymerase catalyzes the transcription of DNA into RNA using the four ribonucleoside triphosphates as substrates. This is DNA-directed RNA polymerase subunit alpha from Streptococcus gordonii (strain Challis / ATCC 35105 / BCRC 15272 / CH1 / DL1 / V288).